The chain runs to 1045 residues: 3-hydroxy-3-methylglutaryl-coenzyme A reductase 2 (1045 aa).

Residues 1 to 24 (MSLPLKTIVHLVKPFACTARFSAR) lie on the Cytoplasmic side of the membrane. Residues 25–45 (YPIHVIVVAVLLSAAAYLSVT) form a helical membrane-spanning segment. Residues 46–186 (QSYLNEWKLD…FSNKTSEFDQ (141 aa)) lie on the Lumenal side of the membrane. N-linked (GlcNAc...) asparagine glycosylation is found at Asn115, Asn150, Asn158, and Asn179. A helical membrane pass occupies residues 187–207 (FDLFIILAAYLTLFYTLCCLF). The SSD domain occupies 188-356 (DLFIILAAYL…ATFYSAILSM (169 aa)). Over 208 to 216 (NDMRKIGSK) the chain is Cytoplasmic. Residues 217–237 (FWLSFSALSNSACALYLSLYT) traverse the membrane as a helical segment. At 238-243 (THSLLK) the chain is on the lumenal side. The chain crosses the membrane as a helical span at residues 244-264 (KPASLLSLVIGLPFIVVIIGF). The Cytoplasmic segment spans residues 265-301 (KHKVRLAAFSLQKFHRISIDKKITVSNIIYEAMFQEG). The chain crosses the membrane as a helical span at residues 302-322 (AYLIRDYLFYISSFIGCAIYA). Residues 323 to 324 (RH) lie on the Lumenal side of the membrane. The chain crosses the membrane as a helical span at residues 325-345 (LPGLVNFCILSTFMLVFDLLL). Topologically, residues 346–402 (SATFYSAILSMKLEINIIHRSTVIRQTLEEDGVVPTTADIIYKDETASEPHFLRSNV) are cytoplasmic. The chain crosses the membrane as a helical span at residues 403–423 (AIILGKASVIGLLLLINLYVF). Residues 424 to 497 (TDKLNATILN…DSVSNAIRDQ (74 aa)) are Lumenal-facing. N-linked (GlcNAc...) asparagine glycosylation is found at Asn428 and Asn455. Residues 498–518 (FISKLLFFAFAVSISINVYLL) form a helical membrane-spanning segment. At 519 to 1045 (NAAKIHTGYM…GPPCKTSALL (527 aa)) the chain is on the cytoplasmic side. Residue Thr565 is modified to Phosphothreonine. The active-site Charge relay system is Glu710. CoA is bound at residue 716-722 (SAMRGCK). Residues 777-779 (SRF) and 804-812 (DAMGMNMIS) contribute to the NADP(+) site. The active-site Charge relay system is Lys844. 873–875 (VLK) is a binding site for CoA. Asp920 (charge relay system) is an active-site residue. 1015–1016 (SH) provides a ligand contact to CoA. The active-site Proton donor is the His1016. Positions 1018–1045 (THNRKTNKANELPQPSNKGPPCKTSALL) are disordered. 1020-1021 (NR) lines the NADP(+) pocket.

The protein belongs to the HMG-CoA reductase family.

The protein localises to the endoplasmic reticulum membrane. It localises to the nucleus envelope. It catalyses the reaction (R)-mevalonate + 2 NADP(+) + CoA = (3S)-3-hydroxy-3-methylglutaryl-CoA + 2 NADPH + 2 H(+). Its pathway is metabolic intermediate biosynthesis; (R)-mevalonate biosynthesis; (R)-mevalonate from acetyl-CoA: step 3/3. HMG-CoA reductase; part of the first module of ergosterol biosynthesis pathway constitutes by the early steps of the pathway, conserved across all eukaryotes, and which results in the formation of mevalonate from acetyl-coenzyme A (acetyl-CoA). HMG1 and HMG2 catalyze the reduction of hydroxymethylglutaryl-CoA (HMG-CoA) to mevalonate that is the rate-limiting step within the first mosule. The first module starts with the action of the cytosolic acetyl-CoA acetyltransferase ERG10 that catalyzes the formation of acetoacetyl-CoA. The hydroxymethylglutaryl-CoA synthase ERG13 then condenses acetyl-CoA with acetoacetyl-CoA to form HMG-CoA. The rate-limiting step of the early module is the reduction to mevalonate by the 3-hydroxy-3-methylglutaryl-coenzyme A (HMG-CoA) reductases HMG1 and HMG2 which are derived from a single ancestral HMGR gene by gene duplication. The protein is 3-hydroxy-3-methylglutaryl-coenzyme A reductase 2 of Saccharomyces cerevisiae (strain ATCC 204508 / S288c) (Baker's yeast).